A 380-amino-acid chain; its full sequence is MKVVHVVRQFHPSIGGMEEVVLNVARQHQANSADTVEIVTLDRVFTDPSAQLAQHELHQGLSITRIGYRGSSRYPIAPSVLGAIRSADVVHLHGIDFFYDYLALTKPLHGKPMVVSTHGGFFHTAYASRMKQIWFQTLTRTSALAYARVIATSENDGDLFAKVVAPSRLRVIENGVDVEKYAGQGARAPGRTMLYFGRWSVNKGLIETLELLQAALTRDPQWRLIIAGREYDLNEADLRKAIAERGLQDKVQLSMSPSQQQLCALMQQAQFFVCLSRHEGFGIAAVEAMSAGLIPILSDIPPFVRLATESGQGVIVNRDRIQAAADSVQALALQANADFDARRTATMAYVARYDWRHVVGRYIDEYHAALGTPRTQEAVR.

This sequence belongs to the glycosyltransferase group 1 family. Glycosyltransferase 4 subfamily.

It carries out the reaction beta-D-Glc-(1-&gt;4)-alpha-D-Glc-di-trans,octa-cis-undecaprenyl diphosphate + GDP-alpha-D-mannose = alpha-D-Man-(1-&gt;3)-beta-D-Glc-(1-&gt;4)-alpha-D-Glc-1-di-trans,octa-cis-undecaprenyl diphosphate + GDP + H(+). Functionally, involved in the biosynthesis of the exopolysaccharide xanthan, a polymer that is comprised of repeating pentasaccharide units with the structure of a beta-(1,4)-linked D-glucose backbone with trisaccharide side chains composed of mannose-beta-(1,4)-glucuronic acid-beta-(1,2)-mannose attached to alternate glucose residues in the backbone by alpha-(1,3) linkages. Xanthan is involved in pathogenicity but has also been used in a variety of applications as a specialty polymer for commercial applications, including food additives, where they act as viscosifying, stabilizing, emulsifying, or gelling agents. In Xanthomonas campestris, this protein is GDP-mannose:cellobiosyl-diphosphopolyprenol alpha-mannosyltransferase (gumH).